We begin with the raw amino-acid sequence, 659 residues long: Beta-galactosidase BgaA (659 aa).

Arg103 lines the substrate pocket. Cys107 is a binding site for Zn(2+). Asn141 serves as a coordination point for substrate. Glu142 functions as the Proton donor in the catalytic mechanism. Positions 148, 150, and 153 each coordinate Zn(2+). Glu298 functions as the Nucleophile in the catalytic mechanism. A substrate-binding site is contributed by Trp307.

This sequence belongs to the glycosyl hydrolase 42 family. Dimer.

The catalysed reaction is Hydrolysis of terminal non-reducing beta-D-galactose residues in beta-D-galactosides.. Its activity is regulated as follows. Inhibited by Cu(2+), Hg(2+) and Zn(2+). No effect with Ca(2+), Mg(2+), Mn(2+) or excess EDTA (10 mM). Its function is as follows. Involved in plant cell wall degradation in cooperation with cellulosome. Hydrolyzes both p-nitrophenyl-alpha-L-arabinopyranoside (pNPAp) and p-nitrophenyl-beta-D-galactopyranoside (pNPGp), with higher activity for pNPAp. Shows hydrolysis activity against p-nitrophenyl-beta-D-fucopyranoside (pNPFp), but not against p-nitrophenyl-alpha-L-arabinofuranoside (pNPAf), o-nitrophenyl-beta-D-galactopyranoside (oNPGp), p-nitrophenyl-beta-D-xylopyranoside (pNPXp), p-nitrophenyl-beta-D-glucopyranoside (pNPGLp), p-nitrophenyl-beta-D-cellobiopyranoside (pNPCp), p-nitrophenyl-beta-lactopyranoside (pNPLp) or p-nitrophenyl-alpha-galactopyranoside (pNPalphaGp). No detectable activity against arabinan or arabinoxylan, but activity against arabinogalactan can be detected. Increases degradation activity of alpha-L-arabinofuranosidase (ArfA) and endo-1,4-beta-xylanase (XynA) when corn fiber gum and corn stem powder are used as substrates. In Clostridium cellulovorans (strain ATCC 35296 / DSM 3052 / OCM 3 / 743B), this protein is Beta-galactosidase BgaA (bgaA).